We begin with the raw amino-acid sequence, 345 residues long: Biotin synthase (345 aa).

The Radical SAM core domain occupies 66-291 (PEVEVEGIIS…RTMLRFAGGR (226 aa)). Cysteine 81, cysteine 85, and cysteine 88 together coordinate [4Fe-4S] cluster. Positions 124, 157, 216, and 286 each coordinate [2Fe-2S] cluster.

It belongs to the radical SAM superfamily. Biotin synthase family. In terms of assembly, homodimer. [4Fe-4S] cluster serves as cofactor. Requires [2Fe-2S] cluster as cofactor.

The enzyme catalyses (4R,5S)-dethiobiotin + (sulfur carrier)-SH + 2 reduced [2Fe-2S]-[ferredoxin] + 2 S-adenosyl-L-methionine = (sulfur carrier)-H + biotin + 2 5'-deoxyadenosine + 2 L-methionine + 2 oxidized [2Fe-2S]-[ferredoxin]. Its pathway is cofactor biosynthesis; biotin biosynthesis; biotin from 7,8-diaminononanoate: step 2/2. In terms of biological role, catalyzes the conversion of dethiobiotin (DTB) to biotin by the insertion of a sulfur atom into dethiobiotin via a radical-based mechanism. The polypeptide is Biotin synthase (Mycobacterium avium (strain 104)).